The following is a 122-amino-acid chain: uncharacterized protein (122 aa).

A signal peptide spans 1–17 (MKYSSIFSMLSFFILFA).

This is an uncharacterized protein from Escherichia coli (strain K12).